The chain runs to 122 residues: Small ribosomal subunit protein uS13 (122 aa).

A disordered region spans residues 99-122 (RGQRTHTNARTRKGPAKAIAGKKK).

Belongs to the universal ribosomal protein uS13 family. Part of the 30S ribosomal subunit. Forms a loose heterodimer with protein S19. Forms two bridges to the 50S subunit in the 70S ribosome.

Functionally, located at the top of the head of the 30S subunit, it contacts several helices of the 16S rRNA. In the 70S ribosome it contacts the 23S rRNA (bridge B1a) and protein L5 of the 50S subunit (bridge B1b), connecting the 2 subunits; these bridges are implicated in subunit movement. Contacts the tRNAs in the A and P-sites. This chain is Small ribosomal subunit protein uS13, found in Rhodopseudomonas palustris (strain HaA2).